We begin with the raw amino-acid sequence, 418 residues long: Dihydrolipoyllysine-residue acetyltransferase component of pyruvate dehydrogenase complex (418 aa).

The Lipoyl-binding domain occupies Pro-2–Ile-78. The residue at position 43 (Lys-43) is an N6-lipoyllysine. The Peripheral subunit-binding (PSBD) domain maps to Phe-133–Lys-170. Residue His-388 is part of the active site.

It belongs to the 2-oxoacid dehydrogenase family. Forms a 24-polypeptide structural core with octahedral symmetry. Requires (R)-lipoate as cofactor.

The enzyme catalyses N(6)-[(R)-dihydrolipoyl]-L-lysyl-[protein] + acetyl-CoA = N(6)-[(R)-S(8)-acetyldihydrolipoyl]-L-lysyl-[protein] + CoA. In terms of biological role, the pyruvate dehydrogenase complex catalyzes the overall conversion of pyruvate to acetyl-CoA and CO(2). It contains multiple copies of three enzymatic components: pyruvate dehydrogenase (E1), dihydrolipoamide acetyltransferase (E2) and lipoamide dehydrogenase (E3). This is Dihydrolipoyllysine-residue acetyltransferase component of pyruvate dehydrogenase complex (pdhC) from Rickettsia bellii (strain RML369-C).